Here is a 283-residue protein sequence, read N- to C-terminus: Probable endonuclease 4 (283 aa).

Histidine 69, histidine 109, glutamate 145, aspartate 179, histidine 182, histidine 216, aspartate 229, histidine 231, and glutamate 261 together coordinate Zn(2+).

It belongs to the AP endonuclease 2 family. Requires Zn(2+) as cofactor.

The catalysed reaction is Endonucleolytic cleavage to 5'-phosphooligonucleotide end-products.. Endonuclease IV plays a role in DNA repair. It cleaves phosphodiester bonds at apurinic or apyrimidinic (AP) sites, generating a 3'-hydroxyl group and a 5'-terminal sugar phosphate. The polypeptide is Probable endonuclease 4 (Campylobacter curvus (strain 525.92)).